A 456-amino-acid chain; its full sequence is Gamma-aminobutyric acid receptor subunit alpha-1 (456 aa).

The signal sequence occupies residues Met-1–Gly-27. Residues Gln-28–Phe-253 are Extracellular-facing. N-linked (GlcNAc...) asparagine glycosylation is present at Asn-38. A 4-aminobutanoate-binding site is contributed by Arg-94. Asn-138 carries an N-linked (GlcNAc...) asparagine glycan. Thr-157 contributes to the 4-aminobutanoate binding site. A disulfide bridge connects residues Cys-166 and Cys-180. The helical transmembrane segment at Val-254 to Leu-274 threads the bilayer. Over Asn-275–Val-279 the chain is Cytoplasmic. A helical membrane pass occupies residues Pro-280 to Arg-301. Residues Asn-302–Thr-311 are Extracellular-facing. Residues Ala-312–Thr-333 traverse the membrane as a helical segment. Over Val-334–Arg-421 the chain is Cytoplasmic. The helical transmembrane segment at Leu-422–Thr-441 threads the bilayer. Residues Tyr-442–Gln-456 lie on the Extracellular side of the membrane.

The protein belongs to the ligand-gated ion channel (TC 1.A.9) family. Gamma-aminobutyric acid receptor (TC 1.A.9.5) subfamily. GABRA1 sub-subfamily. As to quaternary structure, heteropentamer, formed by a combination of alpha (GABRA1-6), beta (GABRB1-3), gamma (GABRG1-3), delta (GABRD), epsilon (GABRE), rho (GABRR1-3), pi (GABRP) and theta (GABRQ) subunits, each subunit exhibiting distinct physiological and pharmacological properties. Interacts with UBQLN1. Interacts with TRAK1. Interacts with KIF21B. Identified in a complex of 720 kDa composed of LHFPL4, NLGN2, GABRA1, GABRB2, GABRG2 and GABRB3. Interacts with LHFPL4. Interacts with NLGN2. Interacts with SHISA7; interaction leads to the regulation of GABA(A) receptor trafficking, channel deactivation kinetics and pharmacology. As to expression, cerebellar granule cells, Purkinje cells and stellate/basket cells.

It is found in the postsynaptic cell membrane. It localises to the cell membrane. Its subcellular location is the cytoplasmic vesicle membrane. It carries out the reaction chloride(in) = chloride(out). Allosterically activated by benzodiazepines, the neuroanesthetic alphaxalone and pentobarbital. Inhibited by the antagonist bicuculline. Potentiated by histamine. Functionally, alpha subunit of the heteropentameric ligand-gated chloride channel gated by gamma-aminobutyric acid (GABA), a major inhibitory neurotransmitter in the brain. GABA-gated chloride channels, also named GABA(A) receptors (GABAAR), consist of five subunits arranged around a central pore and contain GABA active binding site(s) located at the alpha and beta subunit interface(s). When activated by GABA, GABAARs selectively allow the flow of chloride anions across the cell membrane down their electrochemical gradient. Alpha-1/GABRA1-containing GABAARs are largely synaptic. Chloride influx into the postsynaptic neuron following GABAAR opening decreases the neuron ability to generate a new action potential, thereby reducing nerve transmission. GABAARs containing alpha-1 and beta-2 or -3 subunits exhibit synaptogenic activity; the gamma-2 subunit being necessary but not sufficient to induce rapid synaptic contacts formation. GABAARs function also as histamine receptor where histamine binds at the interface of two neighboring beta subunits and potentiates GABA response. GABAARs containing alpha, beta and epsilon subunits also permit spontaneous chloride channel activity while preserving the structural information required for GABA-gated openings. Alpha-1-mediated plasticity in the orbitofrontal cortex regulates context-dependent action selection. Together with rho subunits, may also control neuronal and glial GABAergic transmission in the cerebellum. The chain is Gamma-aminobutyric acid receptor subunit alpha-1 (GABRA1) from Bos taurus (Bovine).